The chain runs to 853 residues: Cytochrome P450 monooxygenase mpaDE' (853 aa).

The Lumenal portion of the chain corresponds to 1 to 6 (MESLSL). Residues 7–29 (TWITAIAVVLYLVQRYVRSYWRL) traverse the membrane as a helical segment. Residues 30–853 (KDIPGPVLAK…DIENAIEGQK (824 aa)) are Cytoplasmic-facing. Residue C449 participates in heme binding.

It belongs to the cytochrome P450 family. Requires heme as cofactor.

The protein resides in the endoplasmic reticulum membrane. It carries out the reaction 5-methylorsellinate + reduced [NADPH--hemoprotein reductase] + O2 = 4,6-dihydroxy-2-(hydroxymethyl)-3-methylbenzoate + oxidized [NADPH--hemoprotein reductase] + H2O + H(+). The catalysed reaction is 4,6-dihydroxy-2-(hydroxymethyl)-3-methylbenzoate + H(+) = 5,7-dihydroxy-4-methylphthalide + H2O. The protein operates within secondary metabolite biosynthesis; terpenoid biosynthesis. In terms of biological role, cytochrome P450 monooxygenase; part of the gene cluster that mediates the biosynthesis of mycophenolic acid (MPA), the first isolated antibiotic natural product in the world obtained from a culture of Penicillium brevicompactum in 1893. MpaDE' is an endoplasmic reticulum-bound enzyme that catalyzes the conversion of 5-methylorsellinic acid (5MOA) into the phthalide compound 5,7-dihydroxy-4,6-dimethylphthalide (DHMP). MpaDE' first catalyzes hydroxylation of 5-MOA to 4,6-dihydroxy-2-(hydroxymethyl)-3-methylbenzoic acid (DHMB), and then acts as a lactone synthase that catalyzes the ring closure to convert DHMB into DHMP. The first step of the pathway is the synthesis of 5-methylorsellinic acid (5MOA) by the cytosolic polyketide synthase mpaC. 5MOA is then converted to the phthalide compound 5,7-dihydroxy-4,6-dimethylphthalide (DHMP) by the endoplasmic reticulum-bound cytochrome P450 monooxygenase mpaDE. MpaDE first catalyzes hydroxylation of 5-MOA to 4,6-dihydroxy-2-(hydroxymethyl)-3-methylbenzoic acid (DHMB). MpaDE then acts as a lactone synthase that catalyzes the ring closure to convert DHMB into DHMP. The next step is the prenylation of DHMP by the Golgi apparatus-associated prenyltransferase mpaA to yield farnesyl-DHMP (FDHMP). The ER-bound oxygenase mpaB then mediates the oxidative cleavage the C19-C20 double bond in FDHMP to yield FDHMP-3C via a mycophenolic aldehyde intermediate. The O-methyltransferase mpaG catalyzes the methylation of FDHMP-3C to yield MFDHMP-3C. After the cytosolic methylation of FDHMP-3C, MFDHMP-3C enters into peroxisomes probably via free diffusion due to its low molecular weight. Upon a peroxisomal CoA ligation reaction, catalyzed by a beta-oxidation component enzyme acyl-CoA ligase ACL891, MFDHMP-3C-CoA would then be restricted to peroxisomes for the following beta-oxidation pathway steps. The peroxisomal beta-oxidation machinery than converts MFDHMP-3C-CoA into MPA_CoA, via a beta-oxidation chain-shortening process. Finally mpaH acts as a peroxisomal acyl-CoA hydrolase with high substrate specificity toward MPA-CoA to release the final product MPA. The protein is Cytochrome P450 monooxygenase mpaDE' of Penicillium brevicompactum.